A 164-amino-acid chain; its full sequence is Cyclic pyranopterin monophosphate synthase (164 aa).

Substrate contacts are provided by residues 75 to 77 and 116 to 117; these read MCH and ME. Residue Asp-131 is part of the active site.

The protein belongs to the MoaC family. As to quaternary structure, homohexamer; trimer of dimers.

The catalysed reaction is (8S)-3',8-cyclo-7,8-dihydroguanosine 5'-triphosphate = cyclic pyranopterin phosphate + diphosphate. The protein operates within cofactor biosynthesis; molybdopterin biosynthesis. Functionally, catalyzes the conversion of (8S)-3',8-cyclo-7,8-dihydroguanosine 5'-triphosphate to cyclic pyranopterin monophosphate (cPMP). The polypeptide is Cyclic pyranopterin monophosphate synthase (Staphylococcus aureus (strain Mu3 / ATCC 700698)).